The following is a 345-amino-acid chain: Skn-1 dependent zygotic transcript 15 protein (345 aa).

An F-box domain is found at 11–55 (AFGLHKLPHLVSDKVVKSMVPMELFTYSMVAEETKALVKRLFKKV).

Functionally, may have a role in embryogenesis. This is Skn-1 dependent zygotic transcript 15 protein (sdz-15) from Caenorhabditis elegans.